We begin with the raw amino-acid sequence, 148 residues long: Large ribosomal subunit protein uL15 (148 aa).

Residues 1–46 (MITIEDLKPTPGSNKKYKRLGRGQGSGKGKTAGKGHKGQKSRGTGK) form a disordered region. A compositionally biased stretch (basic residues) spans 31 to 45 (TAGKGHKGQKSRGTG).

The protein belongs to the universal ribosomal protein uL15 family. Part of the 50S ribosomal subunit.

In terms of biological role, binds to the 23S rRNA. This chain is Large ribosomal subunit protein uL15, found in Fervidobacterium nodosum (strain ATCC 35602 / DSM 5306 / Rt17-B1).